Consider the following 226-residue polypeptide: HTH-type transcriptional regulator Rv0324 (226 aa).

An HTH arsR-type domain is found at 7-101; it reads RKAALLDQVA…LVQVVADEHL (95 aa). The H-T-H motif DNA-binding region spans 41 to 64; that stretch reads VEAIATATGMNLTTASANLQALKS. Residues 129 to 218 form the Rhodanese domain; sequence EAGEVTLVDV…WRLAGLPVDE (90 aa). The Cysteine persulfide intermediate role is filled by Cys-177.

Functionally, part of a regulatory network that coordinates tolerance to the antitubercular drug bedaquiline. This is HTH-type transcriptional regulator Rv0324 from Mycobacterium tuberculosis (strain ATCC 25618 / H37Rv).